Consider the following 351-residue polypeptide: Methylthioribose-1-phosphate isomerase (351 aa).

Substrate contacts are provided by residues 51–53, arginine 94, and glutamine 199; that span reads RGA. Residue aspartate 240 is the Proton donor of the active site. Residue 250-251 participates in substrate binding; it reads NK.

Belongs to the EIF-2B alpha/beta/delta subunits family. MtnA subfamily. As to quaternary structure, homodimer.

It catalyses the reaction 5-(methylsulfanyl)-alpha-D-ribose 1-phosphate = 5-(methylsulfanyl)-D-ribulose 1-phosphate. Its pathway is amino-acid biosynthesis; L-methionine biosynthesis via salvage pathway; L-methionine from S-methyl-5-thio-alpha-D-ribose 1-phosphate: step 1/6. Functionally, catalyzes the interconversion of methylthioribose-1-phosphate (MTR-1-P) into methylthioribulose-1-phosphate (MTRu-1-P). In Bacillus thuringiensis (strain Al Hakam), this protein is Methylthioribose-1-phosphate isomerase.